A 76-amino-acid polypeptide reads, in one-letter code: Kunitz-type serine protease inhibitor HNTX-03141017 (76 aa).

Residues 1-21 form the signal peptide; sequence RLSVLRYYRRPDLRILPQETF. The BPTI/Kunitz inhibitor domain maps to 25-73; the sequence is CRLPSDRGRCKASFERWYFNGRTCAKFIYGGCGGNGNKFPTQEACMKRC. Intrachain disulfides connect C25-C73, C34-C56, and C48-C69.

Belongs to the venom Kunitz-type family. 02 (native) subfamily. In terms of tissue distribution, expressed by the venom gland.

The protein localises to the secreted. In terms of biological role, serine protease inhibitor that inhibits trypsin at a molar ratio of 1:1. In Cyriopagopus hainanus (Chinese bird spider), this protein is Kunitz-type serine protease inhibitor HNTX-03141017.